The following is a 362-amino-acid chain: Cytochrome P450 monooxygenase-like protein avaN (362 aa).

Residues 3–23 traverse the membrane as a helical segment; the sequence is VILAIFIAAAGCLFSSWRIYW.

The protein belongs to the cytochrome P450 family.

It is found in the membrane. Its pathway is secondary metabolite biosynthesis. Its function is as follows. Cytochrome P450 monooxygenase-like protein; part of the cluster that mediates the biosynthesis of a highly modified cyclo-arginine-tryptophan dipeptide (cRW). The first step of the pathway is perfornmed by the arginine-containing cyclodipeptide synthase (RCPDS) avaA that acts as the scaffold-generating enzyme and is responsible for formation of the cyclo-Arg-Trp (cRW) diketopiperazine. AvaB then acts as a multifunctional flavoenzyme that is responsible for generating the cyclo-Arg-formylkynurenine DKP, which can be deformylated by avaC. AvaB then further catalyzes an additional N-oxidation followed by cyclization and dehydration. The next step is an N-acetylation of the guanidine group catalyzed by the arginine N-acetyltransferase avaD. The roles of the additional enzymes identified within the ava cluster still have to be determined. The sequence is that of Cytochrome P450 monooxygenase-like protein avaN from Aspergillus versicolor.